The following is a 56-amino-acid chain: Large ribosomal subunit protein bL33 (56 aa).

The protein belongs to the bacterial ribosomal protein bL33 family.

The sequence is that of Large ribosomal subunit protein bL33 from Dichelobacter nodosus (strain VCS1703A).